We begin with the raw amino-acid sequence, 1481 residues long: ABC multidrug transporter atrH (1481 aa).

Residues M1–L10 show a composition bias toward basic and acidic residues. 2 disordered regions span residues M1 to Q45 and I61 to F89. N19, N76, and N320 each carry an N-linked (GlcNAc...) asparagine glycan. An ABC transporter 1 domain is found at A134 to E396. The chain crosses the membrane as a helical span at residues M507–Y527. N-linked (GlcNAc...) asparagine glycosylation occurs at N530. Helical transmembrane passes span L542–W562, L587–F607, G616–F636, E650–V670, and F758–L778. The ABC transporter 2 domain maps to F838 to S1081. G874–T881 contributes to the ATP binding site. The next 6 membrane-spanning stretches (helical) occupy residues Y1174–W1194, I1210–M1230, A1249–A1269, L1298–I1318, I1327–V1347, and A1358–V1378. N-linked (GlcNAc...) asparagine glycosylation occurs at N1395. Residues V1446–L1466 form a helical membrane-spanning segment.

The protein belongs to the ABC transporter superfamily. ABCG family. PDR (TC 3.A.1.205) subfamily.

The protein localises to the cell membrane. In terms of biological role, pleiotropic ABC efflux transporter involved in the basal level of azole susceptibility. This chain is ABC multidrug transporter atrH, found in Aspergillus oryzae (strain ATCC 42149 / RIB 40) (Yellow koji mold).